The sequence spans 194 residues: MAATAPKAGGSAPEAAGSAEAPLQYSLLLQYLVGDKRQPRLLEPGSLGGIPSPAKSEEQKMIERAMESCAFKAVLACVGGFVLGGAFGIFTAGIDTNVGFDPKDPYRTPTAKEVLKDMGQRGMSYAKNFAIVGAMFSCTECLVESYRGKSDWKNSVISGCITGGAIGFRAGVKAGAIGCGGFAAFSAAIDYYLR.

2 disulfide bridges follow: cysteine 69–cysteine 141 and cysteine 160–cysteine 179. A run of 3 helical transmembrane segments spans residues 74-94, 123-143, and 170-190; these read VLAC…TAGI, MSYA…ECLV, and AGVK…AAID.

It belongs to the Tim17/Tim22/Tim23 family. As to quaternary structure, component of the TIM22 complex, whose core is composed of TIMM22, associated with peripheral protein FXC1/TIMM10B and the 70 kDa heterohexamer. In most cases, the 70 kDa complex is composed of TIMM9 and TIMM10 (TIMM10A or TIMM10B). A small fraction of the 70 kDa complex is composed of TIMM8 (TIMM8A/DDP1 or TIMM8B/DDP2) and TIMM13. The TIM22 complex also contains AGK and TIMM29. Interacts directly with TIMM9, TIMM10A and FXC1/TIMM10B. Interacts (when oxidized) with TIMM29; interaction is direct. Disulfide bonds promote efficient assembly of the TIM22 complex.

It localises to the mitochondrion inner membrane. Essential core component of the TIM22 complex, a complex that mediates the import and insertion of multi-pass transmembrane proteins into the mitochondrial inner membrane. In the TIM22 complex, it constitutes the voltage-activated and signal-gated channel. Forms a twin-pore translocase that uses the membrane potential as external driving force in 2 voltage-dependent steps. This chain is Mitochondrial import inner membrane translocase subunit Tim22 (Timm22), found in Mus musculus (Mouse).